A 476-amino-acid chain; its full sequence is Scopoletin glucosyltransferase (476 aa).

Residue histidine 16 is the Proton acceptor of the active site. Position 16 (histidine 16) interacts with an anthocyanidin. The Charge relay role is filled by aspartate 119. Residues alanine 343, glutamine 345, histidine 360, tryptophan 363, asparagine 364, serine 365, and glutamate 368 each contribute to the UDP-alpha-D-glucose site. Alanine 383 lines the an anthocyanidin pocket. The UDP-alpha-D-glucose site is built by glutamate 384 and glutamine 385.

This sequence belongs to the UDP-glycosyltransferase family.

It carries out the reaction scopoletin + UDP-alpha-D-glucose = scopolin + UDP + H(+). In terms of biological role, glucosyltransferase acting preferentially on aromatic substrates of the phenylpropanoid types. The best substrates are scopoletin and esculetin. Required for full resistance to virus. This is Scopoletin glucosyltransferase (TOGT1) from Nicotiana tabacum (Common tobacco).